A 159-amino-acid chain; its full sequence is Endoribonuclease YbeY (159 aa).

Zn(2+) is bound by residues H125, H129, and H135.

Belongs to the endoribonuclease YbeY family. It depends on Zn(2+) as a cofactor.

The protein localises to the cytoplasm. Functionally, single strand-specific metallo-endoribonuclease involved in late-stage 70S ribosome quality control and in maturation of the 3' terminus of the 16S rRNA. The polypeptide is Endoribonuclease YbeY (Limosilactobacillus reuteri (strain DSM 20016) (Lactobacillus reuteri)).